The chain runs to 351 residues: Histidine protein kinase SaeS (351 aa).

2 helical membrane-spanning segments follow: residues 9-29 and 40-60; these read IIIG…IAYI and TLTL…SIFI. The HAMP domain maps to 61 to 114; sequence NPLIQKIKQFNIKTKQFANGNYASNDKTFNSPKEIYELNQSFNKMASEITQQMN. The 220-residue stretch at 129–348 folds into the Histidine kinase domain; it reads NLAHDLKTPL…TMTVTLHKLD (220 aa). Residue His132 is modified to Phosphohistidine; by autocatalysis.

Autophosphorylated.

Its subcellular location is the cell membrane. It carries out the reaction ATP + protein L-histidine = ADP + protein N-phospho-L-histidine.. Functionally, member of the two-component regulatory system SaeR/SaeS involved in the regulation of staphylococcal virulence factors in a strain-dependent fashion. Probably functions as a membrane-associated protein kinase that upon sensing the appropriate signal, autophosphorylates and in turn activates the cytosolic response regulator SaeR. In Staphylococcus aureus (strain USA300), this protein is Histidine protein kinase SaeS (saeS).